The sequence spans 458 residues: Brassinosteroid-related acyltransferase 1 (458 aa).

The active-site Proton acceptor is His164.

Belongs to the plant acyltransferase family. Highly expressed in young tissues and vascular bundles. Mostly expressed in young leaves, primary roots, flowers (including petals and sepals), and siliques.

It is found in the endoplasmic reticulum. The protein resides in the nucleus. Its pathway is plant hormone biosynthesis; brassinosteroid biosynthesis. Brassinosteroids (BR) acyltransferase with acyl-CoA ligase activity toward brassinolide (BL), castasterone (CS), typhasterol (TY), 6-deoxotyphasterol (6-deoxoTY), and 6-deoxocastasterone (6-deoxoCS) and thus converts them to corresponding lauroyl esters. Regulates BR homeostasis and promotes BR-mediated cell growth regulation. Involved in vascular bundle development. The chain is Brassinosteroid-related acyltransferase 1 from Arabidopsis thaliana (Mouse-ear cress).